Reading from the N-terminus, the 261-residue chain is 5'-nucleotidase SurE (261 aa).

A divalent metal cation-binding residues include Asp-18, Asp-19, Ser-50, and Asn-102.

It belongs to the SurE nucleotidase family. It depends on a divalent metal cation as a cofactor.

The protein resides in the cytoplasm. The enzyme catalyses a ribonucleoside 5'-phosphate + H2O = a ribonucleoside + phosphate. In terms of biological role, nucleotidase that shows phosphatase activity on nucleoside 5'-monophosphates. This is 5'-nucleotidase SurE from Rhodospirillum rubrum (strain ATCC 11170 / ATH 1.1.1 / DSM 467 / LMG 4362 / NCIMB 8255 / S1).